The following is a 265-amino-acid chain: O-methyltransferase NEC2 (265 aa).

Belongs to the methyltransferase superfamily.

It catalyses the reaction desmethylnectriapyrone + S-adenosyl-L-methionine = nectriapyrone + S-adenosyl-L-homocysteine + H(+). O-methyltransferase; part of the gene cluster that mediates the biosynthesis of nectriapyrone and its analogs phomopyrone A, acropyrone and zaepyrone. The nectriapyrone biosynthetic gene cluster consists of two genes, the highly reducing polyketide synthase NEC1 that produces a demethylated analog of nectriapyrone from one unit of acetyl-CoA and one unit of malonyl-CoA; and the O-methyltransferase NEC2 that further methylates the NEC1 product to yield nectriapyrone. Nectriapyrone is further hydrolyzed to nectriapyrone D, also known as gulypyrone B, by an unidentified hydrolase localized outside the nectriapyrone cluster. The sequence is that of O-methyltransferase NEC2 from Pyricularia oryzae (strain 70-15 / ATCC MYA-4617 / FGSC 8958) (Rice blast fungus).